The chain runs to 65 residues: Hirudin-3 (65 aa).

The tract at residues 1–3 (VVY) is interaction with thrombin active site. Intrachain disulfides connect C6-C14, C16-C28, and C22-C39. The interval 39 to 65 (CVTGEGTPKPQSHNDGDFEEIPEEYLQ) is disordered. The O-linked (GalNAc...) threonine glycan is linked to T45. The interval 55 to 65 (DFEEIPEEYLQ) is interaction with fibrinogen-binding exosite of thrombin. Positions 55 to 65 (DFEEIPEEYLQ) are enriched in acidic residues. Y63 is modified (sulfotyrosine).

It belongs to the protease inhibitor I14 (hirudin) family.

It is found in the secreted. In terms of biological role, hirudin is a potent thrombin-specific protease inhibitor. It forms a stable non-covalent complex with alpha-thrombin, thereby abolishing its ability to cleave fibrinogen. In Hirudo medicinalis (Medicinal leech), this protein is Hirudin-3.